The chain runs to 591 residues: Acetyltransferase spyB (591 aa).

The N-linked (GlcNAc...) asparagine glycan is linked to Asn114. Helical transmembrane passes span 123-143, 168-188, 199-219, 228-248, 309-329, 383-403, 453-473, 481-501, and 529-549; these read GTII…LIFL, TLLY…ILIL, LWIF…ISHG, VGVQ…INPL, SAFL…LNCA, ASIL…PLFG, IFFV…LMGI, ILFF…QAAW, and LVGF…WLCP.

Belongs to the wax synthase family.

It is found in the membrane. The enzyme catalyses sartorypyrone F + acetyl-CoA = sartorypyrone G + CoA. The catalysed reaction is sartorypyrone D + acetyl-CoA = sartorypyrone A + CoA. It functions in the pathway secondary metabolite biosynthesis; terpenoid biosynthesis. Its function is as follows. Acetyltransferase; part of the gene cluster that mediates the biosynthesis of meroterpenoids called sartorypyrones. SpyB catalyzes the last step of the pathway and is responsible for the acetylation of sartorypyrones D and F to produce sartorypyrones A and G, respectively. The biosynthesis of sartorypyrones begins with the production of triacetic acid lactone (TAL) by the NR-PKS spyA using one molecule of acetyl-CoA and two molecules of malonyl-CoA. The prenyltransferase spyF then conjugates geranylgeranyl pyrophosphate (GGPP) to TAL to form geranylgeranyl-triacetate lactone, for which the pathway-specific geranylgeranyl pyrophosphate synthase (GGPS) spyE is required to provide GGPP. Subsequently, geranylgeranyl-triacetate lactone is epoxidized at the terminal olein by the FAD-dependent monooxygenase spyC, followed by cyclization of the terpenoid component catalyzed by the terpene cyclase spyD to produce both the bicyclic sartorypyrone F and the monocyclic sartorypyrone D. Finally, the last step of the biosynthesis involves the acetylation of the meroterpenoids sartorypyrones D and F by the acetyltransferase SpyB to produce sartorypyrones A and G, respectively. This chain is Acetyltransferase spyB, found in Aspergillus fumigatus (strain ATCC MYA-4609 / CBS 101355 / FGSC A1100 / Af293) (Neosartorya fumigata).